The sequence spans 414 residues: MKTYLVGGAVRDKYLQLPTQDRDWVVVGAAPQTLLAQGYQQVGKDFPVFLHPRSKEEYALARTERKAGQGYTGFSTYFAPDVTLEQDLLRRDLTINAMAEDDEGQLIDPYGGLQDLQQRQLRHVSEAFVEDPLRVLRVARFAARFAPLGFEVAAPTLALMQQMSQQGELAHLTPERVWLETEKALSGPVPQVYFQVLRDCGALAVLFPEIDRLFGVPAPAQWHPEIDTGIHTLLTLAMASHLSDDVAVRFAALTHDVGKGLTNPNFWPHHHGHGPAGVRLVREMCQRLRTPNPVRDLALLVAEYHDLIHTVERLRPATLLKLLDTIDVWRRPQRLQQMILCSEADARGRTGLEDQPYPQAGYLRAAYHQAAQVAVCNVITDGFQGAAIREELQTRRLQALKSWKAAQEAALNAE.

ATP contacts are provided by glycine 8 and arginine 11. Glycine 8 and arginine 11 together coordinate CTP. Mg(2+) contacts are provided by aspartate 21 and aspartate 23. ATP-binding residues include arginine 91, arginine 137, and arginine 140. The CTP site is built by arginine 91, arginine 137, and arginine 140. The 102-residue stretch at 228–329 (TGIHTLLTLA…LKLLDTIDVW (102 aa)) folds into the HD domain.

It belongs to the tRNA nucleotidyltransferase/poly(A) polymerase family. Bacterial CCA-adding enzyme type 1 subfamily. As to quaternary structure, monomer. Can also form homodimers and oligomers. Mg(2+) is required as a cofactor. Requires Ni(2+) as cofactor.

The catalysed reaction is a tRNA precursor + 2 CTP + ATP = a tRNA with a 3' CCA end + 3 diphosphate. The enzyme catalyses a tRNA with a 3' CCA end + 2 CTP + ATP = a tRNA with a 3' CCACCA end + 3 diphosphate. Catalyzes the addition and repair of the essential 3'-terminal CCA sequence in tRNAs without using a nucleic acid template. Adds these three nucleotides in the order of C, C, and A to the tRNA nucleotide-73, using CTP and ATP as substrates and producing inorganic pyrophosphate. tRNA 3'-terminal CCA addition is required both for tRNA processing and repair. Also involved in tRNA surveillance by mediating tandem CCA addition to generate a CCACCA at the 3' terminus of unstable tRNAs. While stable tRNAs receive only 3'-terminal CCA, unstable tRNAs are marked with CCACCA and rapidly degraded. This is Multifunctional CCA protein from Edwardsiella ictaluri (strain 93-146).